Consider the following 203-residue polypeptide: CASP-like protein 2U6 (203 aa).

At 1 to 31 (MSEHRIPVAADKKISPPISAGEQKGCKGLKR) the chain is on the cytoplasmic side. The chain crosses the membrane as a helical span at residues 32–52 (TDLMLRFAAFVCCTVTMVVLI). The Extracellular portion of the chain corresponds to 53–84 (TDKQTSAIQVPGFNNLTITKTVSFDLAKAFVY). The N-linked (GlcNAc...) asparagine glycan is linked to Asn-67. The chain crosses the membrane as a helical span at residues 85–105 (LVSAAGIGAGYTLLVLVLSII). The Cytoplasmic segment spans residues 106–111 (SAERSK). A helical membrane pass occupies residues 112–132 (AIAWFIFVFDQLITYVLLAAA). The Extracellular portion of the chain corresponds to 133–164 (AASTEVAYMGAHAPPEASWLKVCSLFGRFCHQ). A helical transmembrane segment spans residues 165 to 185 (LGASLVTSLISTVLFAFSAAI). The Cytoplasmic portion of the chain corresponds to 186 to 203 (SAYYLFSNTNVRPAYSKG).

The protein belongs to the Casparian strip membrane proteins (CASP) family. As to quaternary structure, homodimer and heterodimers.

It is found in the cell membrane. In Selaginella moellendorffii (Spikemoss), this protein is CASP-like protein 2U6.